A 47-amino-acid chain; its full sequence is Short neurotoxin D2A (47 aa).

Disulfide bonds link Cys-3–Cys-24 and Cys-17–Cys-39.

In terms of tissue distribution, expressed by the venom gland.

The protein localises to the secreted. The protein is Short neurotoxin D2A of Micrurus pyrrhocryptus (Coral snake).